The primary structure comprises 704 residues: Elongation factor G (704 aa).

A tr-type G domain is found at Ala8–Thr290. GTP-binding positions include Ala17–Thr24, Asp88–His92, and Asn142–Asp145.

Belongs to the TRAFAC class translation factor GTPase superfamily. Classic translation factor GTPase family. EF-G/EF-2 subfamily.

It localises to the cytoplasm. In terms of biological role, catalyzes the GTP-dependent ribosomal translocation step during translation elongation. During this step, the ribosome changes from the pre-translocational (PRE) to the post-translocational (POST) state as the newly formed A-site-bound peptidyl-tRNA and P-site-bound deacylated tRNA move to the P and E sites, respectively. Catalyzes the coordinated movement of the two tRNA molecules, the mRNA and conformational changes in the ribosome. This is Elongation factor G from Proteus mirabilis (strain HI4320).